We begin with the raw amino-acid sequence, 203 residues long: uncharacterized protein (203 aa).

The chain crosses the membrane as a helical span at residues 9 to 29 (LVVLFTIVTFGLVSPPAALMA).

The protein localises to the membrane. This is an uncharacterized protein from Bacillus subtilis (strain 168).